The sequence spans 239 residues: Homeobox-leucine zipper protein HOX12 (239 aa).

The segment at 22-65 (PEAATSGGEQKKARQRRRRKVKPEAAAALAGESGGDEQAKKRRL) is disordered. The segment at residues 58-117 (EQAKKRRLSDEQARFLEMSFKKERKLETPRKVQLAAELGLDAKQVAVWFQNRRARHKSKL) is a DNA-binding region (homeobox). Residues 107–168 (QNRRARHKSK…KLAAVAAATT (62 aa)) are a coiled coil.

The protein belongs to the HD-ZIP homeobox family. Class I subfamily. Expressed in seedlings, roots, stems, leaf sheaths and panicles.

The protein resides in the nucleus. In terms of biological role, probable transcription factor. This Oryza sativa subsp. indica (Rice) protein is Homeobox-leucine zipper protein HOX12 (HOX12).